Here is a 458-residue protein sequence, read N- to C-terminus: uncharacterized protein (458 aa).

Residues 5 to 65 (QAPVNKNDVV…KGYGFGRVLN (61 aa)) enclose the TRAM domain. [4Fe-4S] cluster is bound by residues C78, C84, C87, and C165. S-adenosyl-L-methionine is bound by residues Q289, Y318, E339, and D387. Residue C414 is the Nucleophile of the active site.

It belongs to the class I-like SAM-binding methyltransferase superfamily. RNA M5U methyltransferase family.

This is an uncharacterized protein from Halalkalibacterium halodurans (strain ATCC BAA-125 / DSM 18197 / FERM 7344 / JCM 9153 / C-125) (Bacillus halodurans).